Reading from the N-terminus, the 129-residue chain is Probable cytochrome b5 2 (129 aa).

One can recognise a Cytochrome b5 heme-binding domain in the interval Glu-3–Leu-79. Heme is bound by residues His-38 and His-62. Residues Val-105–Lys-125 traverse the membrane as a helical segment.

This sequence belongs to the cytochrome b5 family.

The protein localises to the endoplasmic reticulum membrane. The protein resides in the microsome membrane. Its subcellular location is the mitochondrion. Membrane bound hemoprotein which function as an electron carrier for several membrane bound oxygenases. This is Probable cytochrome b5 2 (oca8) from Schizosaccharomyces pombe (strain 972 / ATCC 24843) (Fission yeast).